The sequence spans 184 residues: Flagellar transcriptional regulator FlhC (184 aa).

Zn(2+) contacts are provided by Cys144, Cys147, Cys163, and Cys166.

The protein belongs to the FlhC family. In terms of assembly, heterohexamer composed of two FlhC and four FlhD subunits. Each FlhC binds a FlhD dimer, forming a heterotrimer, and a hexamer assembles by dimerization of two heterotrimers. The cofactor is Zn(2+).

The protein localises to the cytoplasm. In terms of biological role, functions in complex with FlhD as a master transcriptional regulator that regulates transcription of several flagellar and non-flagellar operons by binding to their promoter region. Activates expression of class 2 flagellar genes, including fliA, which is a flagellum-specific sigma factor that turns on the class 3 genes. Also regulates genes whose products function in a variety of physiological pathways. This chain is Flagellar transcriptional regulator FlhC, found in Verminephrobacter eiseniae (strain EF01-2).